A 671-amino-acid polypeptide reads, in one-letter code: MADKKRYEELINILDQYSYDYYVIDNPTVEDAEYDQKMQELLKIEEAHPEWVTPESPSKRVGGEVLEGFKKVAHDTPMLSLANAFNQEDLADFDRRIRDKVGDDIAYMCELKIDGLAVSLQYENGKYKQGATRGDGTIGEDITANLRTIRSIPMKLQKDYSIEVRGEAFMPKRSFQKLNEIREEEGQMLFANPRNAAAGSLRQLDTKIAASRNLDIFLYAVADFGEMGVETHSAGLDMLETLGLKVNKERRLCNSLEEVYAYIEEWTEKRAGLAYDIDGIVLKLNNLEQQRQMGNTVKSPRWSIAYKFPAEEVPTKLLDIELNVGRTGVITPTAVLEPVRVAGTTVSRASLHNEDLITEKDIRIGDTVLIKKAGDIIPEVIKSITEKRSGSEEPFHMPKNCPACDSELVRLEEEVALRCINPKCPAQIKEGLIHFVSRNAMNIDGLGEKVIIQLFSQHLIKDVADLFFLSKEKLLELERMGEKSVTNLLASIQASKQNSLEKLLFGLGIRHVGAKAAKSLAIHFDTMDNLKVADKETLTSINDIGEKMADSIVTYFANEEVHDLLEELKRAGVNMTYTGPKLEDMSEEELVFTGKTVVLTGKLEKLTRNDAKALIESLGGNVSGSVSKKTDVVVAGSDAGSKLAKAEELAIPIWSEEDLIEYLPDEGGLNE.

Residues 31–35, 80–81, and E110 each bind NAD(+); these read DAEYD and SL. Catalysis depends on K112, which acts as the N6-AMP-lysine intermediate. NAD(+) is bound by residues R133, E167, K283, and K307. Zn(2+) is bound by residues C401, C404, C419, and C424. A BRCT domain is found at 587–671; it reads EEELVFTGKT…YLPDEGGLNE (85 aa).

The protein belongs to the NAD-dependent DNA ligase family. LigA subfamily. The cofactor is Mg(2+). Mn(2+) serves as cofactor.

The catalysed reaction is NAD(+) + (deoxyribonucleotide)n-3'-hydroxyl + 5'-phospho-(deoxyribonucleotide)m = (deoxyribonucleotide)n+m + AMP + beta-nicotinamide D-nucleotide.. DNA ligase that catalyzes the formation of phosphodiester linkages between 5'-phosphoryl and 3'-hydroxyl groups in double-stranded DNA using NAD as a coenzyme and as the energy source for the reaction. It is essential for DNA replication and repair of damaged DNA. This is DNA ligase from Listeria monocytogenes serotype 4b (strain F2365).